A 449-amino-acid chain; its full sequence is Glucose-6-phosphate isomerase (449 aa).

Glu291 acts as the Proton donor in catalysis. Residues His312 and Lys426 contribute to the active site.

It belongs to the GPI family.

It localises to the cytoplasm. It carries out the reaction alpha-D-glucose 6-phosphate = beta-D-fructose 6-phosphate. It functions in the pathway carbohydrate biosynthesis; gluconeogenesis. The protein operates within carbohydrate degradation; glycolysis; D-glyceraldehyde 3-phosphate and glycerone phosphate from D-glucose: step 2/4. In terms of biological role, catalyzes the reversible isomerization of glucose-6-phosphate to fructose-6-phosphate. This chain is Glucose-6-phosphate isomerase, found in Clostridium botulinum (strain Alaska E43 / Type E3).